The following is a 500-amino-acid chain: Lysine--tRNA ligase (500 aa).

Residues Glu411 and Glu418 each contribute to the Mg(2+) site.

The protein belongs to the class-II aminoacyl-tRNA synthetase family. Homodimer. Mg(2+) serves as cofactor.

Its subcellular location is the cytoplasm. It carries out the reaction tRNA(Lys) + L-lysine + ATP = L-lysyl-tRNA(Lys) + AMP + diphosphate. This Actinobacillus pleuropneumoniae serotype 7 (strain AP76) protein is Lysine--tRNA ligase.